Here is a 292-residue protein sequence, read N- to C-terminus: NAD kinase (292 aa).

Asp73 (proton acceptor) is an active-site residue. NAD(+)-binding positions include 73–74 (DG), 147–148 (NE), His158, Arg175, Asp177, 188–193 (TAYSLS), and Gln247.

Belongs to the NAD kinase family. A divalent metal cation serves as cofactor.

The protein resides in the cytoplasm. It catalyses the reaction NAD(+) + ATP = ADP + NADP(+) + H(+). Involved in the regulation of the intracellular balance of NAD and NADP, and is a key enzyme in the biosynthesis of NADP. Catalyzes specifically the phosphorylation on 2'-hydroxyl of the adenosine moiety of NAD to yield NADP. The polypeptide is NAD kinase (Escherichia coli O157:H7).